Reading from the N-terminus, the 255-residue chain is Probable UDP-N-acetylglucosamine pyrophosphorylase (255 aa).

It carries out the reaction N-acetyl-alpha-D-glucosamine 1-phosphate + UTP + H(+) = UDP-N-acetyl-alpha-D-glucosamine + diphosphate. Its pathway is nucleotide-sugar biosynthesis; UDP-N-acetyl-alpha-D-glucosamine biosynthesis; UDP-N-acetyl-alpha-D-glucosamine from N-acetyl-alpha-D-glucosamine 1-phosphate: step 1/1. This Acanthamoeba polyphaga (Amoeba) protein is Probable UDP-N-acetylglucosamine pyrophosphorylase.